The primary structure comprises 257 residues: MALAKRIIPCLDVTAGRVVKGVNFVELRDAGDPVEIARRYDAQGADELTFLDITATSDGRDLILPIIEAVASQVFIPLTVGGGVRAVEDVRRLLNAGADKVSMNSSAVANPPLVRDAADKYGSQCIVVAIDAKRVSADGEPPRWEVFTHGGRKGTGLDAVEWARKMAELGAGEILLTSMDRDGTKAGFDLALTRAVSDAVPVPVIASGGVGSLEHLAAGITEGHADAVLAASIFHYGEHTVGEAKRFMAERGIAVRL.

Active-site residues include Asp12 and Asp131.

Belongs to the HisA/HisF family. In terms of assembly, heterodimer of HisH and HisF.

It localises to the cytoplasm. The enzyme catalyses 5-[(5-phospho-1-deoxy-D-ribulos-1-ylimino)methylamino]-1-(5-phospho-beta-D-ribosyl)imidazole-4-carboxamide + L-glutamine = D-erythro-1-(imidazol-4-yl)glycerol 3-phosphate + 5-amino-1-(5-phospho-beta-D-ribosyl)imidazole-4-carboxamide + L-glutamate + H(+). Its pathway is amino-acid biosynthesis; L-histidine biosynthesis; L-histidine from 5-phospho-alpha-D-ribose 1-diphosphate: step 5/9. IGPS catalyzes the conversion of PRFAR and glutamine to IGP, AICAR and glutamate. The HisF subunit catalyzes the cyclization activity that produces IGP and AICAR from PRFAR using the ammonia provided by the HisH subunit. The polypeptide is Imidazole glycerol phosphate synthase subunit HisF (Burkholderia pseudomallei (strain 1106a)).